The chain runs to 329 residues: Tetraacyldisaccharide 4'-kinase (329 aa).

58–65 contacts ATP; it reads SVGGTGKT.

Belongs to the LpxK family.

It catalyses the reaction a lipid A disaccharide + ATP = a lipid IVA + ADP + H(+). It functions in the pathway glycolipid biosynthesis; lipid IV(A) biosynthesis; lipid IV(A) from (3R)-3-hydroxytetradecanoyl-[acyl-carrier-protein] and UDP-N-acetyl-alpha-D-glucosamine: step 6/6. In terms of biological role, transfers the gamma-phosphate of ATP to the 4'-position of a tetraacyldisaccharide 1-phosphate intermediate (termed DS-1-P) to form tetraacyldisaccharide 1,4'-bis-phosphate (lipid IVA). The protein is Tetraacyldisaccharide 4'-kinase of Idiomarina loihiensis (strain ATCC BAA-735 / DSM 15497 / L2-TR).